The primary structure comprises 182 residues: MLEKLVTSLETCPMVQRNGYNYFIHPISDGVPIVEPELLREIGCAMVKMLDLDKVDKIVVAEAMGIHIGTVLSLMTGIPMNIVRKREYKLPGEVAVHQTTGYSKGELYLNGLFAGDRVVIIDDVISTGGTARALLSALGQIGVDVVDICVVIQRGNPDIGRDYKSLTKIEVNERVHVIDKHC.

It belongs to the purine/pyrimidine phosphoribosyltransferase family. Archaeal HPRT subfamily. As to quaternary structure, homodimer.

The protein resides in the cytoplasm. The catalysed reaction is IMP + diphosphate = hypoxanthine + 5-phospho-alpha-D-ribose 1-diphosphate. The enzyme catalyses GMP + diphosphate = guanine + 5-phospho-alpha-D-ribose 1-diphosphate. It functions in the pathway purine metabolism; IMP biosynthesis via salvage pathway; IMP from hypoxanthine: step 1/1. In terms of biological role, catalyzes a salvage reaction resulting in the formation of IMP that is energically less costly than de novo synthesis. The chain is Hypoxanthine/guanine phosphoribosyltransferase from Methanosphaerula palustris (strain ATCC BAA-1556 / DSM 19958 / E1-9c).